We begin with the raw amino-acid sequence, 706 residues long: Polycomb protein SCMH1 (706 aa).

MBT repeat units follow at residues 28-126 (FTWD…LQPP) and 134-235 (SSWP…LQPP). 2 disordered regions span residues 233–350 (QPPG…TVPS) and 576–595 (GSDR…RDPS). Composition is skewed to basic residues over residues 272 to 283 (RGRKPGKKRGRT) and 304 to 319 (FPKK…RKPR). Residues 329–340 (PTTSTPEPDTST) are compositionally biased toward low complexity. A compositionally biased stretch (basic and acidic residues) spans 576–591 (GSDRHLESRDPPRLSG). The region spanning 597 to 662 (WTVEDVMQFV…SFHIDRLKQV (66 aa)) is the SAM domain.

It belongs to the SCM family. In terms of assembly, associates with a PRC1-like complex. Interacts with the SAM domain of PHC1 via its SAM domain in vitro. Most abundant in testis. Moderate levels detected in heart, brain, lung, liver, skeletal muscle and kidney and lower levels in spleen.

It is found in the nucleus. In terms of biological role, associates with Polycomb group (PcG) multiprotein complexes; the complex class is required to maintain the transcriptionally repressive state of some genes. This Mus musculus (Mouse) protein is Polycomb protein SCMH1.